The following is a 472-amino-acid chain: Uronate isomerase (472 aa).

Belongs to the metallo-dependent hydrolases superfamily. Uronate isomerase family.

The catalysed reaction is D-glucuronate = D-fructuronate. The enzyme catalyses aldehydo-D-galacturonate = keto-D-tagaturonate. It functions in the pathway carbohydrate metabolism; pentose and glucuronate interconversion. The sequence is that of Uronate isomerase from Halalkalibacterium halodurans (strain ATCC BAA-125 / DSM 18197 / FERM 7344 / JCM 9153 / C-125) (Bacillus halodurans).